The following is a 383-amino-acid chain: AP-1-like transcription factor YAP6 (383 aa).

3 disordered regions span residues Met1 to Asn64, Asp83 to Arg113, and Thr168 to Arg239. The segment covering Asn13–Asn64 has biased composition (polar residues). Low complexity predominate over residues His88–His101. Positions Thr168–Gln184 are enriched in polar residues. A compositionally biased stretch (low complexity) spans Asn185–Pro206. Over residues Gln213 to Leu222 the composition is skewed to polar residues. A bZIP domain is found at Thr221–His284. Residues Arg223–Lys247 form a basic motif region. Over residues Arg227 to Ala237 the composition is skewed to low complexity. Residues Leu249–Asn277 are leucine-zipper.

This sequence belongs to the bZIP family. YAP subfamily. As to quaternary structure, homodimer.

The protein resides in the nucleus. Transcription activator involved in the regulation of genes expressed in response to environmental changes and metabolic requirements. According to genome-wide promoter binding and gene expression studies it regulates, among others, genes involved in ribosome biogenesis, protein synthesis, carbohydrate metabolism, and carbohydrate transport. It may also be involved in pleiotropic drug resistance. When overexpressed, it confers resistance to cisplatin, methylmethanosulfonate, and mitomycin C, and increases cellular tolerance to sodium and lithium. This Saccharomyces cerevisiae (strain ATCC 204508 / S288c) (Baker's yeast) protein is AP-1-like transcription factor YAP6 (YAP6).